A 46-amino-acid polypeptide reads, in one-letter code: Esculentin-1 (46 aa).

A disulfide bridge connects residues Cys-40 and Cys-46.

The protein belongs to the frog skin active peptide (FSAP) family. Brevinin subfamily. As to expression, expressed by the skin glands.

Its subcellular location is the secreted. Functionally, shows antibacterial activity against representative Gram-negative and Gram-positive bacterial species, and hemolytic activity. This Pelophylax lessonae (Pool frog) protein is Esculentin-1.